A 350-amino-acid polypeptide reads, in one-letter code: tRNA uridine(34) hydroxylase (350 aa).

The Rhodanese domain maps to 146-240 (DDPDALFIDM…YARKARDQGL (95 aa)). The active-site Cysteine persulfide intermediate is Cys200.

This sequence belongs to the TrhO family.

The catalysed reaction is uridine(34) in tRNA + AH2 + O2 = 5-hydroxyuridine(34) in tRNA + A + H2O. Functionally, catalyzes oxygen-dependent 5-hydroxyuridine (ho5U) modification at position 34 in tRNAs, the first step in 5-carboxymethoxyuridine (cmo5U) biosynthesis. May be part of an alternate pathway, which is able to bypass cmo5U biogenesis in a subset of tRNAs under aerobic conditions. The sequence is that of tRNA uridine(34) hydroxylase from Escherichia coli O6:K15:H31 (strain 536 / UPEC).